The chain runs to 100 residues: Large ribosomal subunit protein eL14 (100 aa).

Belongs to the eukaryotic ribosomal protein eL14 family.

This Aeropyrum pernix (strain ATCC 700893 / DSM 11879 / JCM 9820 / NBRC 100138 / K1) protein is Large ribosomal subunit protein eL14.